We begin with the raw amino-acid sequence, 189 residues long: Potassium-transporting ATPase KdpC subunit (189 aa).

Residues 6 to 26 form a helical membrane-spanning segment; that stretch reads PAILMLIIFTILCGGIYPAVV.

The protein belongs to the KdpC family. In terms of assembly, the system is composed of three essential subunits: KdpA, KdpB and KdpC.

The protein localises to the cell inner membrane. Functionally, part of the high-affinity ATP-driven potassium transport (or Kdp) system, which catalyzes the hydrolysis of ATP coupled with the electrogenic transport of potassium into the cytoplasm. This subunit acts as a catalytic chaperone that increases the ATP-binding affinity of the ATP-hydrolyzing subunit KdpB by the formation of a transient KdpB/KdpC/ATP ternary complex. In Geobacter sulfurreducens (strain ATCC 51573 / DSM 12127 / PCA), this protein is Potassium-transporting ATPase KdpC subunit.